A 1225-amino-acid chain; its full sequence is Structural maintenance of chromosomes protein 1 (1225 aa).

ATP is bound at residue 33 to 40 (GPNGSGKS). Residues 173-489 (SGSIQYKKEY…SANNQEYDLN (317 aa)) adopt a coiled-coil conformation. In terms of domain architecture, SMC hinge spans 527–641 (PGVKGLVHDL…CNTLNIAKDL (115 aa)). The stretch at 679–1063 (KEEYQSLMSL…LKIKKKRKEL (385 aa)) forms a coiled coil. A Nuclear localization signal motif is present at residues 1057-1061 (KKKRK).

It belongs to the SMC family. SMC1 subfamily. In terms of assembly, cohesin complexes are composed of the SMC1 and SMC3 heterodimer attached via their SMC hinge domain, MCD1/SCC1 which link them, and IRR1/SCC3, which interacts with MCD1. The cohesin complex also interacts with SCC2, which is required for its association with chromosomes.

It is found in the nucleus. It localises to the chromosome. Involved in chromosome cohesion during cell cycle and in DNA repair. Central component of cohesin complex. The cohesin complex is required for the cohesion of sister chromatids after DNA replication. The cohesin complex apparently forms a large proteinaceous ring within which sister chromatids can be trapped. At anaphase, the complex is cleaved and dissociates from chromatin, allowing sister chromatids to segregate. The polypeptide is Structural maintenance of chromosomes protein 1 (SMC1) (Saccharomyces cerevisiae (strain ATCC 204508 / S288c) (Baker's yeast)).